A 213-amino-acid polypeptide reads, in one-letter code: Probable inactive serine/threonine-protein kinase DDB_G0280559 (213 aa).

A Protein kinase domain is found at 1-211 (MVLRYSYVFK…WNEIVNHSFF (211 aa)).

It belongs to the protein kinase superfamily. Ser/Thr protein kinase family.

The chain is Probable inactive serine/threonine-protein kinase DDB_G0280559 from Dictyostelium discoideum (Social amoeba).